The following is a 133-amino-acid chain: Agglutinin alpha chain (133 aa).

The region spanning 1 to 133 (GVTFDDGAYT…LDYFSIYLSL (133 aa)) is the Jacalin-type lectin domain.

Belongs to the jacalin lectin family. Formed of four alpha chains and four beta chains.

Functionally, D-galactose-specific lectin, binds the T-antigen structure Gal-beta1,3-GalNAc. The chain is Agglutinin alpha chain from Maclura pomifera (Osage orange).